The primary structure comprises 319 residues: Lipopolysaccharide heptosyltransferase 1 (319 aa).

T187, T188, K192, E222, M242, D261, T262, G263, and H266 together coordinate ADP-L-glycero-beta-D-manno-heptose.

This sequence belongs to the glycosyltransferase 9 family.

It is found in the cell inner membrane. The catalysed reaction is an alpha-Kdo-(2-&gt;4)-alpha-Kdo-(2-&gt;6)-lipid A + ADP-L-glycero-beta-D-manno-heptose = an L-alpha-D-Hep-(1-&gt;5)-[alpha-Kdo-(2-&gt;4)]-alpha-Kdo-(2-&gt;6)-lipid A + ADP + H(+). The enzyme catalyses alpha-Kdo-(2-&gt;4)-alpha-Kdo-(2-&gt;6)-lipid A (E. coli) + ADP-L-glycero-beta-D-manno-heptose = L-alpha-D-Hep-(1-&gt;5)-[alpha-Kdo-(2-&gt;4)]-alpha-Kdo-(2-&gt;6)-lipid A (E. coli) + ADP + H(+). It participates in bacterial outer membrane biogenesis; LPS core biosynthesis. Its function is as follows. Glycosyltransferase involved in the biosynthesis of the core oligosaccharide region of lipopolysaccharide (LPS). Catalyzes the addition of the first heptose unit to one 3-deoxy-D-manno-octulosonic acid (Kdo) residue of the Kdo2-lipid A module. The analog ADP-mannose can serve as an alternative donor in place of ADP-L-glycero-D-manno-heptose for the glycosylation of Kdo2-lipid A. Displays no activity with ADP-glucose, GDP-mannose, UDP-glucose or UDP-galactose. The chain is Lipopolysaccharide heptosyltransferase 1 from Escherichia coli (strain K12).